A 442-amino-acid chain; its full sequence is 5'-deoxyadenosine deaminase (442 aa).

2 residues coordinate Zn(2+): histidine 72 and histidine 74. Positions 101 and 193 each coordinate substrate. Histidine 220 lines the Zn(2+) pocket. Positions 223 and 309 each coordinate substrate. Aspartate 309 contributes to the Zn(2+) binding site.

The protein belongs to the metallo-dependent hydrolases superfamily. MTA/SAH deaminase family. As to quaternary structure, homotetramer. The cofactor is Zn(2+).

The catalysed reaction is 5'-deoxyadenosine + H2O + H(+) = 5'-deoxyinosine + NH4(+). The enzyme catalyses S-adenosyl-L-homocysteine + H2O + H(+) = S-inosyl-L-homocysteine + NH4(+). It carries out the reaction S-methyl-5'-thioadenosine + H2O + H(+) = S-methyl-5'-thioinosine + NH4(+). It catalyses the reaction adenosine + H2O + H(+) = inosine + NH4(+). It participates in amino-acid biosynthesis; S-adenosyl-L-methionine biosynthesis. In terms of biological role, catalyzes the deamination of three SAM-derived enzymatic products, namely 5'-deoxyadenosine, S-adenosyl-L-homocysteine, and 5'-methylthioadenosine, to produce the inosine analogs. Can also deaminate adenosine. The preferred substrate for this enzyme is 5'-deoxyadenosine, but all these substrates are efficiently deaminated. Likely functions in a S-adenosyl-L-methionine (SAM) recycling pathway from S-adenosyl-L-homocysteine (SAH) produced from SAM-dependent methylation reactions. May also be involved in the recycling of 5'-deoxyadenosine, whereupon the 5'-deoxyribose moiety of 5'-deoxyinosine is further metabolized to deoxyhexoses used for the biosynthesis of aromatic amino acids in methanogens. The polypeptide is 5'-deoxyadenosine deaminase (Methanoregula boonei (strain DSM 21154 / JCM 14090 / 6A8)).